Reading from the N-terminus, the 282-residue chain is Putative phosphoenolpyruvate synthase regulatory protein (282 aa).

ADP is bound at residue 162-169 (GVSRSGKT).

The protein belongs to the pyruvate, phosphate/water dikinase regulatory protein family. PSRP subfamily.

The enzyme catalyses [pyruvate, water dikinase] + ADP = [pyruvate, water dikinase]-phosphate + AMP + H(+). It carries out the reaction [pyruvate, water dikinase]-phosphate + phosphate + H(+) = [pyruvate, water dikinase] + diphosphate. Functionally, bifunctional serine/threonine kinase and phosphorylase involved in the regulation of the phosphoenolpyruvate synthase (PEPS) by catalyzing its phosphorylation/dephosphorylation. The protein is Putative phosphoenolpyruvate synthase regulatory protein of Psychrobacter arcticus (strain DSM 17307 / VKM B-2377 / 273-4).